The sequence spans 535 residues: Arylsulfatase K (535 aa).

Residues 1-21 (MGSGGPLLLLRGLLLVGAAYC) form the signal peptide. Residues aspartate 41 and cysteine 81 each coordinate Ca(2+). Cysteine 81 acts as the Nucleophile in catalysis. Cysteine 81 is modified (3-oxoalanine (Cys)). Residue lysine 129 participates in substrate binding. Asparagine 194 is a glycosylation site (N-linked (GlcNAc...) asparagine). Histidine 252 contacts substrate. Asparagine 263 carries an N-linked (GlcNAc...) asparagine glycan. The Ca(2+) site is built by aspartate 314 and histidine 315. Residues asparagine 376, asparagine 414, and asparagine 499 are each glycosylated (N-linked (GlcNAc...) asparagine).

This sequence belongs to the sulfatase family. The cofactor is Ca(2+). The conversion to 3-oxoalanine (also known as C-formylglycine, FGly), of a serine or cysteine residue in prokaryotes and of a cysteine residue in eukaryotes, is critical for catalytic activity.

The protein localises to the secreted. Its subcellular location is the lysosome. The enzyme catalyses an aryl sulfate + H2O = a phenol + sulfate + H(+). It carries out the reaction Hydrolysis of the 2-sulfate groups of the 2-O-sulfo-D-glucuronate residues of chondroitin sulfate, heparin and heparitin sulfate.. In terms of biological role, catalyzes the hydrolysis of pseudosubstrates such as p-nitrocatechol sulfate and p-nitrophenyl sulfate. Catalyzes the hydrolysis of the 2-sulfate groups of the 2-O-sulfo-D-glucuronate residues of chondroitin sulfate, heparin and heparitin sulfate. Acts selectively on 2-sulfoglucuronate and lacks activity against 2-sulfoiduronate. The polypeptide is Arylsulfatase K (ARSK) (Gallus gallus (Chicken)).